The sequence spans 378 residues: 4-hydroxy-3-methylbut-2-en-1-yl diphosphate synthase (flavodoxin) (378 aa).

[4Fe-4S] cluster contacts are provided by Cys268, Cys271, Cys303, and Glu310.

Belongs to the IspG family. [4Fe-4S] cluster is required as a cofactor.

It catalyses the reaction (2E)-4-hydroxy-3-methylbut-2-enyl diphosphate + oxidized [flavodoxin] + H2O + 2 H(+) = 2-C-methyl-D-erythritol 2,4-cyclic diphosphate + reduced [flavodoxin]. It participates in isoprenoid biosynthesis; isopentenyl diphosphate biosynthesis via DXP pathway; isopentenyl diphosphate from 1-deoxy-D-xylulose 5-phosphate: step 5/6. Its function is as follows. Converts 2C-methyl-D-erythritol 2,4-cyclodiphosphate (ME-2,4cPP) into 1-hydroxy-2-methyl-2-(E)-butenyl 4-diphosphate. The sequence is that of 4-hydroxy-3-methylbut-2-en-1-yl diphosphate synthase (flavodoxin) from Corynebacterium glutamicum (strain ATCC 13032 / DSM 20300 / JCM 1318 / BCRC 11384 / CCUG 27702 / LMG 3730 / NBRC 12168 / NCIMB 10025 / NRRL B-2784 / 534).